The chain runs to 235 residues: MPPIPSEPENISLIHPKVLLLSAGVTTSLFLSYKFYKRYVRRIRNYLDLTPEILDRQTPLYGRVTRVGDGDNFRFYHTPGGILFGWGWLRHVPTKRQELKDETLMVRLCGVDAPERAHWGKPAQPYSEEALAWLKNYIFGRNVVVTPYSIDQYKRLVGRAQVWKWTGKKDISAEMLRNGLGVVYEGKIGAEFGDNESWYRKLEARAKWLRRGLWSLGSSMTTPGEFKKVHYRGDS.

Residues 11–33 (ISLIHPKVLLLSAGVTTSLFLSY) form a helical membrane-spanning segment. Residues 58–216 (TPLYGRVTRV…KWLRRGLWSL (159 aa)) form the TNase-like domain. Residue Arg107 is part of the active site. Asp112 contacts Ca(2+). Residues Glu115 and Arg155 contribute to the active site.

The protein belongs to the LCL3 family.

It localises to the mitochondrion. The protein localises to the membrane. The chain is Probable endonuclease LCL3 (LCL3) from Debaryomyces hansenii (strain ATCC 36239 / CBS 767 / BCRC 21394 / JCM 1990 / NBRC 0083 / IGC 2968) (Yeast).